Reading from the N-terminus, the 1727-residue chain is DNA-directed RNA polymerase II subunit rpb1 (1727 aa).

8 residues coordinate Zn(2+): Cys66, Cys69, Cys76, His79, Cys106, Cys109, Cys147, and Cys175. The Mg(2+) site is built by Asp486, Asp488, and Asp490. The interval 819–831 (PQEFFFHAMGGRE) is bridging helix. Lys1266 participates in a covalent cross-link: Glycyl lysine isopeptide (Lys-Gly) (interchain with G-Cter in ubiquitin). 2 disordered regions span residues 1478–1512 (EPSNVSYPDTPGSQTPSYSYGDGSTTPFHNPYDAP) and 1551–1727 (PTYS…NKKK). The span at 1480-1505 (SNVSYPDTPGSQTPSYSYGDGSTTPF) shows a compositional bias: polar residues. 23 repeat units span residues 1553-1559 (YSPTSPS), 1560-1566 (YSPTSPS), 1567-1573 (YSPTSPS), 1574-1580 (YSPTSPS), 1581-1587 (YSPTSPS), 1588-1594 (YSPTSPS), 1595-1601 (YSPTSPF), 1602-1608 (YSPTSPS), 1609-1615 (YSPTSPS), 1616-1622 (YSPTSPS), 1623-1629 (YSPTSPS), 1630-1636 (YSPTSPS), 1637-1643 (YSPTSPS), 1644-1650 (YSPTSPS), 1651-1657 (YSPTSPS), 1658-1664 (YSPTSPS), 1665-1671 (YSPTSPS), 1672-1678 (YSPTSPS), 1679-1685 (YSPTSPS), 1686-1692 (YSPSSPS), 1693-1699 (YSPSSPS), 1700-1706 (YSPSSPS), and 1707-1713 (YSPSSPT). Residues 1553–1713 (YSPTSPSYSP…SPSYSPSSPT (161 aa)) form a C-terminal domain (CTD); 23 X 7 AA tandem repeats of Y-S-P-[ST]-S-P-[FST] region.

It belongs to the RNA polymerase beta' chain family. In terms of assembly, component of the RNA polymerase II (Pol II) complex consisting of 12 subunits. The tandem heptapeptide repeats in the C-terminal domain (CTD) can be highly phosphorylated. The phosphorylation activates Pol II. Phosphorylation occurs mainly at residues 'Ser-2' and 'Ser-5' of the heptapeptide repeat. The phosphorylation state is believed to result from the balanced action of site-specific CTD kinases and phosphatase, and a 'CTD code' that specifies the position of Pol II within the transcription cycle has been proposed. Post-translationally, following transcription stress, the elongating form of RNA polymerase II (RNA pol IIo) is polyubiquitinated via 'Lys-63'-linkages on Lys-1266 at DNA damage sites without leading to degradation: ubiquitination promotes RNA pol IIo backtracking to allow access by the transcription-coupled nucleotide excision repair (TC-NER) machinery. Subsequent DEF1-dependent polyubiquitination by the elongin complex via 'Lys-48'-linkages may lead to proteasome-mediated degradation; presumably at stalled RNA pol II where TC-NER has failed, to halt global transcription and enable 'last resort' DNA repair pathways.

It is found in the nucleus. It catalyses the reaction RNA(n) + a ribonucleoside 5'-triphosphate = RNA(n+1) + diphosphate. Functionally, DNA-dependent RNA polymerase catalyzes the transcription of DNA into RNA using the four ribonucleoside triphosphates as substrates. Largest and catalytic component of RNA polymerase II which synthesizes mRNA precursors and many functional non-coding RNAs. Forms the polymerase active center together with the second largest subunit. Pol II is the central component of the basal RNA polymerase II transcription machinery. It is composed of mobile elements that move relative to each other. RPB1 is part of the core element with the central large cleft, the clamp element that moves to open and close the cleft and the jaws that are thought to grab the incoming DNA template. At the start of transcription, a single-stranded DNA template strand of the promoter is positioned within the central active site cleft of Pol II. A bridging helix emanates from RPB1 and crosses the cleft near the catalytic site and is thought to promote translocation of Pol II by acting as a ratchet that moves the RNA-DNA hybrid through the active site by switching from straight to bent conformations at each step of nucleotide addition. During transcription elongation, Pol II moves on the template as the transcript elongates. Elongation is influenced by the phosphorylation status of the C-terminal domain (CTD) of Pol II largest subunit (RPB1), which serves as a platform for assembly of factors that regulate transcription initiation, elongation, termination and mRNA processing. This chain is DNA-directed RNA polymerase II subunit rpb1 (polr2a), found in Dictyostelium discoideum (Social amoeba).